Consider the following 381-residue polypeptide: Ecotin-like protein 3 (381 aa).

The segment at 232-381 (EHLEVCPKNN…GSKADPVDGK (150 aa)) is disordered. Polar residues predominate over residues 273 to 292 (NESSPSRPRLSSTAYWPQEN). Over residues 336–347 (RKAEDDVYEKTM) the composition is skewed to basic and acidic residues. A compositionally biased stretch (polar residues) spans 363 to 372 (SASSTKSGNG).

Belongs to the protease inhibitor I11 (ecotin) family.

In Leishmania major, this protein is Ecotin-like protein 3.